A 356-amino-acid polypeptide reads, in one-letter code: Protein RecA (356 aa).

68-75 (GPESSGKT) is a binding site for ATP.

This sequence belongs to the RecA family.

The protein resides in the cytoplasm. Can catalyze the hydrolysis of ATP in the presence of single-stranded DNA, the ATP-dependent uptake of single-stranded DNA by duplex DNA, and the ATP-dependent hybridization of homologous single-stranded DNAs. It interacts with LexA causing its activation and leading to its autocatalytic cleavage. The chain is Protein RecA from Clostridium botulinum (strain Alaska E43 / Type E3).